Reading from the N-terminus, the 157-residue chain is Ribosomal RNA large subunit methyltransferase H (157 aa).

Residues Gly104 and 123 to 128 (LSSLTL) contribute to the S-adenosyl-L-methionine site.

Belongs to the RNA methyltransferase RlmH family. In terms of assembly, homodimer.

It localises to the cytoplasm. The enzyme catalyses pseudouridine(1915) in 23S rRNA + S-adenosyl-L-methionine = N(3)-methylpseudouridine(1915) in 23S rRNA + S-adenosyl-L-homocysteine + H(+). In terms of biological role, specifically methylates the pseudouridine at position 1915 (m3Psi1915) in 23S rRNA. In Nitrosococcus oceani (strain ATCC 19707 / BCRC 17464 / JCM 30415 / NCIMB 11848 / C-107), this protein is Ribosomal RNA large subunit methyltransferase H.